The following is a 73-amino-acid chain: Large ribosomal subunit protein uL29 (73 aa).

The protein belongs to the universal ribosomal protein uL29 family.

This Saccharolobus solfataricus (strain ATCC 35092 / DSM 1617 / JCM 11322 / P2) (Sulfolobus solfataricus) protein is Large ribosomal subunit protein uL29 (rpl29).